A 460-amino-acid polypeptide reads, in one-letter code: MALSAAIILAAGEGTRMRSNKPKVLHTLAGKTFLNRVMDSVAALDPDTLAVVVHYQAERVAEAARSYNEHVTIVEQDDIPGTGRAVQCAMAQLTQKDDLDGAVLIAASDMPLLDTDTLDQLLAFHEKSGNGATVLTTILDDPTGYGRIIRDSEGNVLRIVEQKDANSSELAVREVNTSVYVFDAKLLAEAIANLKSNNAQGEFYLTDALEAAKANGAVGAFAAPDPLSVEGVNDRVQLAALAKAHNKRVCEHWMREGVTILDPDTTWIEDDVQIARDAVILPGCFLQGHTVIGEAAEVGPYTTLIGATIDAEAHVERSRVQETHIGRAANIGPWTYLRPGNELGEGSKAGAFVEMKKAHIGNGTKVPHLSYVGDADLGEHTNIGGGTITANYDGVHKHHTTIGSNVHVGAGNLFVAPVTVGDGVTTGAGSVVRHDVPSDSMVYSENTQHVVEGWKPEWER.

A pyrophosphorylase region spans residues 1-235 (MALSAAIILA…PLSVEGVNDR (235 aa)). Residues 9-12 (LAAG), Lys-23, Gln-76, and 81-82 (GT) contribute to the UDP-N-acetyl-alpha-D-glucosamine site. Residue Asp-109 coordinates Mg(2+). UDP-N-acetyl-alpha-D-glucosamine contacts are provided by Gly-146, Glu-161, Asn-176, and Asn-233. Asn-233 is a binding site for Mg(2+). Residues 236–256 (VQLAALAKAHNKRVCEHWMRE) form a linker region. The N-acetyltransferase stretch occupies residues 257–460 (GVTILDPDTT…VEGWKPEWER (204 aa)). The UDP-N-acetyl-alpha-D-glucosamine site is built by Arg-338 and Lys-356. His-368 acts as the Proton acceptor in catalysis. Residues Tyr-371 and Asn-382 each contribute to the UDP-N-acetyl-alpha-D-glucosamine site. Acetyl-CoA-binding positions include 391–392 (NY) and Ala-428.

In the N-terminal section; belongs to the N-acetylglucosamine-1-phosphate uridyltransferase family. It in the C-terminal section; belongs to the transferase hexapeptide repeat family. In terms of assembly, homotrimer. Mg(2+) serves as cofactor.

The protein localises to the cytoplasm. It carries out the reaction alpha-D-glucosamine 1-phosphate + acetyl-CoA = N-acetyl-alpha-D-glucosamine 1-phosphate + CoA + H(+). The catalysed reaction is N-acetyl-alpha-D-glucosamine 1-phosphate + UTP + H(+) = UDP-N-acetyl-alpha-D-glucosamine + diphosphate. It participates in nucleotide-sugar biosynthesis; UDP-N-acetyl-alpha-D-glucosamine biosynthesis; N-acetyl-alpha-D-glucosamine 1-phosphate from alpha-D-glucosamine 6-phosphate (route II): step 2/2. The protein operates within nucleotide-sugar biosynthesis; UDP-N-acetyl-alpha-D-glucosamine biosynthesis; UDP-N-acetyl-alpha-D-glucosamine from N-acetyl-alpha-D-glucosamine 1-phosphate: step 1/1. It functions in the pathway bacterial outer membrane biogenesis; LPS lipid A biosynthesis. Functionally, catalyzes the last two sequential reactions in the de novo biosynthetic pathway for UDP-N-acetylglucosamine (UDP-GlcNAc). The C-terminal domain catalyzes the transfer of acetyl group from acetyl coenzyme A to glucosamine-1-phosphate (GlcN-1-P) to produce N-acetylglucosamine-1-phosphate (GlcNAc-1-P), which is converted into UDP-GlcNAc by the transfer of uridine 5-monophosphate (from uridine 5-triphosphate), a reaction catalyzed by the N-terminal domain. The polypeptide is Bifunctional protein GlmU (Bifidobacterium adolescentis (strain ATCC 15703 / DSM 20083 / NCTC 11814 / E194a)).